We begin with the raw amino-acid sequence, 2175 residues long: Homeobox protein cut (2175 aa).

2 disordered regions span residues 139-170 and 249-432; these read NLLA…QQSG and GNVK…GQPA. Composition is skewed to low complexity over residues 153–169 and 249–268; these read LLSA…LQQS and GNVK…SNNS. Positions 265 to 343 form a coiled coil; that stretch reads SNNSHQDEEE…ENKDAGEASL (79 aa). The segment covering 271–294 has biased composition (acidic residues); sequence DEEELDDEEEDEEEDEDEDDEEEN. Positions 309–320 are enriched in polar residues; that stretch reads QQETRTEPSATT. Residues 344–359 are compositionally biased toward low complexity; it reads NVSNNHNTTDSNNSCS. A compositionally biased stretch (polar residues) spans 360–374; sequence RKNNNGGNESEQHVA. A compositionally biased stretch (low complexity) spans 384–415; sequence NNNTNTSNNNNTSNTATSNTNNNNNNNSSSGN. A coiled-coil region spans residues 433 to 499; that stretch reads VLLAAKDKEI…NEALAEATAL (67 aa). The segment covering 503–515 has biased composition (low complexity); sequence ASTNNNNNSQSSD. Disordered stretches follow at residues 503–600 and 656–765; these read ASTN…KIKK and ASDA…NTNA. Positions 546–568 are enriched in acidic residues; it reads AEDDEEDEDQAMLVDSEEAEDKP. Residues 673 to 696 are compositionally biased toward basic residues; the sequence is QQQHQHQQQHHQQQHLHQQHHHHL. Over residues 697–710 the composition is skewed to low complexity; the sequence is QQQPNSGSNSNPAS. Basic residues predominate over residues 714 to 735; the sequence is HHGHHLHGHGLLHPSSAHHLHH. A compositionally biased stretch (low complexity) spans 738–765; the sequence is TESNSNSSTPTAAGNNNGSNNSSSNTNA. Positions 877 to 964 form a DNA-binding region, CUT 1; it reads NMDKYANQAL…VMLLKSLIPK (88 aa). Disordered stretches follow at residues 1001–1083 and 1197–1289; these read LMKQ…HDDQ and QRSS…EFAA. 2 stretches are compositionally biased toward basic and acidic residues: residues 1009–1030 and 1062–1083; these read QHRE…EDSK and QRER…HDDQ. Residues 1056–1161 adopt a coiled-coil conformation; that stretch reads EQAAAQQRER…QQQAAQAQAQ (106 aa). Residues 1249–1282 show a composition bias toward low complexity; it reads GAPPTAAPPTGGASSNSAAPSPLSNSILPPALSS. A DNA-binding region (CUT 2) is located at residues 1330–1417; it reads QQQFDMFNNL…VHKLVASQYK (88 aa). Residues 1463-1522 adopt a coiled-coil conformation; sequence AQAQHLMQQMQAAAMSAAMQQQQVAQAQQQAQQAQQAQQHLQQQAQQHLQQQQHLAQQQH. Low complexity predominate over residues 1507 to 1540; that stretch reads AQQHLQQQQHLAQQQHPHQQHHQAAAAAAALHHQ. 6 disordered regions span residues 1507–1588, 1695–1747, 1803–1826, 1922–1955, 2069–2097, and 2113–2175; these read AQQH…PMLM, ERRE…PSKK, QVPH…ATPF, RSDD…DKTT, KQEE…QKLK, and SSTG…GWNY. Positions 1564 to 1573 are enriched in gly residues; the sequence is AQPGGPGGNQ. A DNA-binding region (CUT 3) is located at residues 1608-1695; sequence YEMAALTQDL…VERLQLLKNE (88 aa). Low complexity predominate over residues 1709 to 1732; the sequence is NQQDNSSDTSSNDTNDFYTSSPGP. A DNA-binding region (homeobox) is located at residues 1745-1804; sequence SKKQRVLFSEEQKEALRLAFALDPYPNVGTIEFLANELGLATRTITNWFHNHRMRLKQQV. Phosphoserine occurs at positions 1940 and 1944. Residues 2126-2135 show a composition bias toward pro residues; it reads PLAPPPPPPA. A compositionally biased stretch (low complexity) spans 2136–2175; the sequence is ASSSIVSGESTTSSSSSSNTSSSTPAVTTAAATAAAGWNY.

Belongs to the CUT homeobox family. In terms of tissue distribution, detected in many cells in the central nervous system, all external sensory organs, some peripheral neurons, and in the non-neural cells of the spiracles and the Malpighian tubules.

Its subcellular location is the nucleus. Its function is as follows. Regulator of cell fate decisions in multiple lineages. Specifically, functions as a determination factor that specifies sensory organ identity in precursor cells. Probably also involved in cell type specification of Malpighian tubules. In absence of cut gene external sensory organs are transformed into chordotonal organs. This chain is Homeobox protein cut (ct), found in Drosophila melanogaster (Fruit fly).